The sequence spans 424 residues: Inositol phosphosphingolipids phospholipase C (424 aa).

A Mg(2+)-binding site is contributed by Glu49. His289 functions as the Proton acceptor in the catalytic mechanism. 2 consecutive transmembrane segments (helical) span residues 335–357 (LRIA…IAWC) and 364–386 (VIIL…CIGL).

Belongs to the neutral sphingomyelinase family. Mg(2+) is required as a cofactor.

The protein resides in the cell membrane. It is found in the endoplasmic reticulum membrane. It functions in the pathway lipid metabolism; sphingolipid metabolism. Functionally, inositol phosphosphingolipids phospholipase essential for the coordination of cell wall formation. Responsible for the hydrolysis of the phosphosphingolipids (IPS), inositol phosphorylceramide (IPC), mannosylinositol phosphorylceramide (MIPC), and mannosyldiinositol phosphorylceramide (M(IP)2C). The sequence is that of Inositol phosphosphingolipids phospholipase C (css1) from Schizosaccharomyces pombe (strain 972 / ATCC 24843) (Fission yeast).